A 260-amino-acid polypeptide reads, in one-letter code: Aspartate/glutamate leucyltransferase (260 aa).

The protein belongs to the R-transferase family. Bpt subfamily.

It localises to the cytoplasm. It catalyses the reaction N-terminal L-glutamyl-[protein] + L-leucyl-tRNA(Leu) = N-terminal L-leucyl-L-glutamyl-[protein] + tRNA(Leu) + H(+). The catalysed reaction is N-terminal L-aspartyl-[protein] + L-leucyl-tRNA(Leu) = N-terminal L-leucyl-L-aspartyl-[protein] + tRNA(Leu) + H(+). Functionally, functions in the N-end rule pathway of protein degradation where it conjugates Leu from its aminoacyl-tRNA to the N-termini of proteins containing an N-terminal aspartate or glutamate. The polypeptide is Aspartate/glutamate leucyltransferase (Sphingomonas elodea).